We begin with the raw amino-acid sequence, 360 residues long: Probable neutral protease 2 homolog MCYG_04257 (360 aa).

Residues 1-17 (MQLIAFLAALGVPVAFA) form the signal peptide. Residues 18 to 182 (ATIPSVPLNH…KVKAGSIDKR (165 aa)) constitute a propeptide that is removed on maturation. Cysteines 190 and 261 form a disulfide. The N-linked (GlcNAc...) asparagine glycan is linked to asparagine 262. Disulfide bonds link cysteine 268-cysteine 286 and cysteine 300-cysteine 360. Position 311 (histidine 311) interacts with Zn(2+). Glutamate 312 is an active-site residue. Zn(2+) is bound by residues histidine 315 and aspartate 326.

This sequence belongs to the peptidase M35 family. Requires Zn(2+) as cofactor.

It localises to the secreted. The catalysed reaction is Preferential cleavage of bonds with hydrophobic residues in P1'. Also 3-Asn-|-Gln-4 and 8-Gly-|-Ser-9 bonds in insulin B chain.. Probable secreted metalloprotease that shows high activities on basic nuclear substrates such as histone and protamine. May be involved in virulence. This Arthroderma otae (strain ATCC MYA-4605 / CBS 113480) (Microsporum canis) protein is Probable neutral protease 2 homolog MCYG_04257.